We begin with the raw amino-acid sequence, 164 residues long: Ubiquitin-fold modifier-conjugating enzyme 1 (164 aa).

The Glycyl thioester intermediate role is filled by Cys-116.

It belongs to the ubiquitin-conjugating enzyme family. UFC1 subfamily.

E2-like enzyme which forms an intermediate with UFM1 via a thioester linkage. This chain is Ubiquitin-fold modifier-conjugating enzyme 1, found in Drosophila persimilis (Fruit fly).